Consider the following 177-residue polypeptide: Large ribosomal subunit protein uL10 (177 aa).

The protein belongs to the universal ribosomal protein uL10 family. Part of the ribosomal stalk of the 50S ribosomal subunit. The N-terminus interacts with L11 and the large rRNA to form the base of the stalk. The C-terminus forms an elongated spine to which L12 dimers bind in a sequential fashion forming a multimeric L10(L12)X complex.

Its function is as follows. Forms part of the ribosomal stalk, playing a central role in the interaction of the ribosome with GTP-bound translation factors. This chain is Large ribosomal subunit protein uL10, found in Mycobacterium leprae (strain Br4923).